The following is a 476-amino-acid chain: Light-independent protochlorophyllide reductase subunit N (476 aa).

[4Fe-4S] cluster is bound by residues cysteine 31, cysteine 56, and cysteine 116.

Belongs to the BchN/ChlN family. Protochlorophyllide reductase is composed of three subunits; ChlL, ChlN and ChlB. Forms a heterotetramer of two ChlB and two ChlN subunits. Requires [4Fe-4S] cluster as cofactor.

The protein localises to the plastid. Its subcellular location is the chloroplast. The catalysed reaction is chlorophyllide a + oxidized 2[4Fe-4S]-[ferredoxin] + 2 ADP + 2 phosphate = protochlorophyllide a + reduced 2[4Fe-4S]-[ferredoxin] + 2 ATP + 2 H2O. It participates in porphyrin-containing compound metabolism; chlorophyll biosynthesis (light-independent). Component of the dark-operative protochlorophyllide reductase (DPOR) that uses Mg-ATP and reduced ferredoxin to reduce ring D of protochlorophyllide (Pchlide) to form chlorophyllide a (Chlide). This reaction is light-independent. The NB-protein (ChlN-ChlB) is the catalytic component of the complex. This Staurastrum punctulatum (Green alga) protein is Light-independent protochlorophyllide reductase subunit N.